Reading from the N-terminus, the 460-residue chain is Bifunctional protein GlmU (460 aa).

Positions 1–229 are pyrophosphorylase; that stretch reads MSNYAIILAA…FEESLGVNDR (229 aa). Residues 8–11, Lys-22, Gln-72, and 77–78 each bind UDP-N-acetyl-alpha-D-glucosamine; these read LAAG and GT. Residue Asp-102 coordinates Mg(2+). Residues Gly-139, Glu-154, Asn-169, and Asn-227 each contribute to the UDP-N-acetyl-alpha-D-glucosamine site. Residue Asn-227 participates in Mg(2+) binding. The linker stretch occupies residues 230–250; the sequence is VALATAEDVMRRRINKTHMIN. Positions 251–460 are N-acetyltransferase; the sequence is GVTFQNPNAT…KKPHHPSQQK (210 aa). Residues Arg-332 and Lys-350 each contribute to the UDP-N-acetyl-alpha-D-glucosamine site. His-362 acts as the Proton acceptor in catalysis. Residues Tyr-365 and Asn-376 each coordinate UDP-N-acetyl-alpha-D-glucosamine. Residues Ala-379, 385–386, Ser-404, Ala-422, and Arg-439 each bind acetyl-CoA; that span reads NY.

The protein in the N-terminal section; belongs to the N-acetylglucosamine-1-phosphate uridyltransferase family. It in the C-terminal section; belongs to the transferase hexapeptide repeat family. Homotrimer. The cofactor is Mg(2+).

It is found in the cytoplasm. The catalysed reaction is alpha-D-glucosamine 1-phosphate + acetyl-CoA = N-acetyl-alpha-D-glucosamine 1-phosphate + CoA + H(+). The enzyme catalyses N-acetyl-alpha-D-glucosamine 1-phosphate + UTP + H(+) = UDP-N-acetyl-alpha-D-glucosamine + diphosphate. The protein operates within nucleotide-sugar biosynthesis; UDP-N-acetyl-alpha-D-glucosamine biosynthesis; N-acetyl-alpha-D-glucosamine 1-phosphate from alpha-D-glucosamine 6-phosphate (route II): step 2/2. It functions in the pathway nucleotide-sugar biosynthesis; UDP-N-acetyl-alpha-D-glucosamine biosynthesis; UDP-N-acetyl-alpha-D-glucosamine from N-acetyl-alpha-D-glucosamine 1-phosphate: step 1/1. Its pathway is bacterial outer membrane biogenesis; LPS lipid A biosynthesis. Functionally, catalyzes the last two sequential reactions in the de novo biosynthetic pathway for UDP-N-acetylglucosamine (UDP-GlcNAc). The C-terminal domain catalyzes the transfer of acetyl group from acetyl coenzyme A to glucosamine-1-phosphate (GlcN-1-P) to produce N-acetylglucosamine-1-phosphate (GlcNAc-1-P), which is converted into UDP-GlcNAc by the transfer of uridine 5-monophosphate (from uridine 5-triphosphate), a reaction catalyzed by the N-terminal domain. This Streptococcus thermophilus (strain ATCC BAA-491 / LMD-9) protein is Bifunctional protein GlmU.